The primary structure comprises 25 residues: Neuromedin-U-25 (25 aa).

At Gln18 the chain carries Pyrrolidone carboxylic acid. Asn25 bears the Asparagine amide mark.

Belongs to the NmU family.

Its subcellular location is the secreted. Its function is as follows. Stimulates uterine smooth muscle contraction and causes selective vasoconstriction. The polypeptide is Neuromedin-U-25 (NMU) (Canis lupus familiaris (Dog)).